Here is a 437-residue protein sequence, read N- to C-terminus: Chloride intracellular channel protein 5 (437 aa).

The span at 1 to 14 (MNDENYSTTIYNRV) shows a compositional bias: polar residues. A disordered region spans residues 1–197 (MNDENYSTTI…VSEGNESASA (197 aa)). The segment covering 34–45 (DEVHEDVRREDN) has biased composition (basic and acidic residues). 4 consecutive repeat copies span residues 118-125 (QSDSEEPQ), 126-133 (ASDPEEPQ), 134-141 (ASDPEEPQ), and 142-149 (GPDPEEPQ). Residues 118 to 149 (QSDSEEPQASDPEEPQASDPEEPQGPDPEEPQ) are 4 X 8 AA tandem repeats of [AGQ]-[SP]-D-[PS]-E-E-P-Q. A compositionally biased stretch (acidic residues) spans 121–157 (SEEPQASDPEEPQASDPEEPQGPDPEEPQENGNEMEA). A compositionally biased stretch (polar residues) spans 161–184 (SPSSFTIQNSRAFSTREISPTSYS). The G-site signature appears at 217-220 (CPFS). A helical membrane pass occupies residues 219 to 239 (FSQRLFMILWLKGVVFNVTTV). Positions 263 to 427 (NGDVKTDVNK…AADSEIELAY (165 aa)) constitute a GST C-terminal domain.

Belongs to the chloride channel CLIC family. In terms of assembly, component of a multimeric complex consisting of several cytoskeletal proteins, including actin, ezrin, alpha-actinin, gelsolin, and IQGAP1. Interacts with AKAP9. Interacts with TPRN. TPRN, CLIC5 and PTPQR form concentric rings at the base of stereocilia and may form a complex. Interacts with EZR, MYO6 and RDX; the proteins may work together as a complex to stabilize linkages between the plasma membrane and subjacent actin cytoskeleton at the stereocilium base. Post-translationally, phosphorylated. In terms of tissue distribution, expressed in most tissues. Higher levels found in kidney, heart, skeletal muscle, T84 and PANC-1 cells.

Its subcellular location is the golgi apparatus. It is found in the cytoplasm. It localises to the cytoskeleton. The protein resides in the microtubule organizing center. The protein localises to the centrosome. Its subcellular location is the cell cortex. It is found in the membrane. It localises to the apical cell membrane. The protein resides in the mitochondrion. The protein localises to the cell projection. Its subcellular location is the stereocilium. It catalyses the reaction Na(+)(in) = Na(+)(out). It carries out the reaction K(+)(in) = K(+)(out). The enzyme catalyses chloride(in) = chloride(out). Inhibited by F-actin. Its function is as follows. In the soluble state, catalyzes glutaredoxin-like thiol disulfide exchange reactions with reduced glutathione as electron donor. Can insert into membranes and form non-selective ion channels almost equally permeable to Na(+), K(+) and Cl(-). Required for normal hearing. It is necessary for the formation of stereocilia in the inner ear and normal development of the organ of Corti. May play a role in the regulation of transepithelial ion absorption and secretion. Is required for the development and/or maintenance of the proper glomerular endothelial cell and podocyte architecture. Plays a role in formation of the lens suture in the eye, which is important for normal optical properties of the lens. The chain is Chloride intracellular channel protein 5 (CLIC5) from Bos taurus (Bovine).